Consider the following 202-residue polypeptide: Prephenate decarboxylase (202 aa).

The protein belongs to the prephenate decarboxylase family.

The enzyme catalyses prephenate + H(+) = 3-[(4R)-4-hydroxycyclohexa-1,5-dien-1-yl]-2-oxopropanoate + CO2. In terms of biological role, in vivo, involved in the biosynthesis of 2-carboxy-6-hydroxyoctahydroindole (Choi) present in the nonribosomal glycopeptides aeruginoside 126A and B. AerD is an unusual prephenate decarboxylase that avoids the typical aromatization of the cyclohexadienol ring of prephenate. AerD catalyzes the protonation at C8 followed by decarboxylation to produce the dihydro-4-hydroxyphenylpyruvate regioisomer A258 (H2HPP A258)(3-(4-hydroxycyclohexa- 1,5-dienyl)-2-oxopropanoic acid), which is able to undergo a nonenzymatic isomerization to produce dihydro-4-hydroxyphenylpyruvate regioisomer A295 (H2HPP A295)(3-(4-hydroxycyclohex-2-enylidene)-2-oxopropanoic acid). This chain is Prephenate decarboxylase, found in Planktothrix agardhii (strain NIVA-CYA 126/8).